We begin with the raw amino-acid sequence, 457 residues long: Hepatocyte nuclear factor 3-beta (457 aa).

The segment at 14–93 is transactivation domain 1; it reads DWSSYYAEPE…AGAMAGMGGS (80 aa). A Nuclear localization signal motif is present at residues 106 to 113; the sequence is LSPSLSPL. Thr156 is modified (phosphothreonine). The fork-head DNA-binding region spans 159 to 252; sequence KPPYSYISLI…FENGCYLRRQ (94 aa). Ser212 and Ser283 each carry phosphoserine. A compositionally biased stretch (low complexity) spans 280–292; the sequence is AQASQAQLGEAAG. The interval 280–365 is disordered; that stretch reads AQASQAQLGE…PGLPPEAHLK (86 aa). Residues 298 to 310 show a composition bias toward polar residues; the sequence is PAGTESPHSSASP. The residue at position 301 (Thr301) is a Phosphothreonine. Residues Ser303, Ser306, Ser307, and Ser309 each carry the phosphoserine modification. Positions 339–352 are enriched in low complexity; sequence PGQQQQAAAHLLGP. The transactivation domain 2 stretch occupies residues 361–457; it reads EAHLKPEHHY…VYSRPIMNSS (97 aa). A phosphoserine mark is found at Ser436 and Ser457.

In terms of assembly, binds DNA as a monomer. Binds TLE1. Interacts with FOXA1 and FOXA3. Interacts with PRKDC. Interacts with AKT1. Interacts with TET1; this interaction may recruit TET1 to specific genomic loci to mediate their demethylation. Post-translationally, phosphorylation on Thr-156 abolishes binding to target promoters and subsequent transcription activation upon insulin stimulation.

It localises to the nucleus. It is found in the cytoplasm. Functionally, transcription factor that is involved in embryonic development, establishment of tissue-specific gene expression and regulation of gene expression in differentiated tissues. Is thought to act as a 'pioneer' factor opening the compacted chromatin for other proteins through interactions with nucleosomal core histones and thereby replacing linker histones at target enhancer and/or promoter sites. Binds DNA with the consensus sequence 5'-[AC]A[AT]T[AG]TT[GT][AG][CT]T[CT]-3'. In embryonic development is required for notochord formation. Involved in the development of multiple endoderm-derived organ systems such as the liver, pancreas and lungs; FOXA1 and FOXA2 seem to have at least in part redundant roles. Originally described as a transcription activator for a number of liver genes such as AFP, albumin, tyrosine aminotransferase, PEPCK, etc. Interacts with the cis-acting regulatory regions of these genes. Involved in glucose homeostasis; regulates the expression of genes important for glucose sensing in pancreatic beta-cells and glucose homeostasis. Involved in regulation of fat metabolism. Binds to fibrinogen beta promoter and is involved in IL6-induced fibrinogen beta transcriptional activation. The polypeptide is Hepatocyte nuclear factor 3-beta (FOXA2) (Homo sapiens (Human)).